The sequence spans 448 residues: U-box domain-containing protein 30 (448 aa).

Residues aspartate 63–leucine 137 enclose the U-box domain. ARM repeat units follow at residues leucine 179 to leucine 219 and serine 221 to glutamate 260.

The catalysed reaction is S-ubiquitinyl-[E2 ubiquitin-conjugating enzyme]-L-cysteine + [acceptor protein]-L-lysine = [E2 ubiquitin-conjugating enzyme]-L-cysteine + N(6)-ubiquitinyl-[acceptor protein]-L-lysine.. Its pathway is protein modification; protein ubiquitination. Functions as an E3 ubiquitin ligase. In Arabidopsis thaliana (Mouse-ear cress), this protein is U-box domain-containing protein 30 (PUB30).